Here is a 206-residue protein sequence, read N- to C-terminus: Pyridoxine/pyridoxamine 5'-phosphate oxidase (206 aa).

Residues 53 to 58 (RMVLLK), 68 to 69 (YT), Lys75, and Gln97 contribute to the FMN site. Lys58 provides a ligand contact to substrate. Residues Tyr115, Arg119, and Ser123 each contribute to the substrate site. FMN is bound by residues 132 to 133 (QS) and Trp177. A substrate-binding site is contributed by 183-185 (RLH). Arg187 contributes to the FMN binding site.

Belongs to the pyridoxamine 5'-phosphate oxidase family. In terms of assembly, homodimer. FMN serves as cofactor.

It catalyses the reaction pyridoxamine 5'-phosphate + O2 + H2O = pyridoxal 5'-phosphate + H2O2 + NH4(+). The catalysed reaction is pyridoxine 5'-phosphate + O2 = pyridoxal 5'-phosphate + H2O2. The protein operates within cofactor metabolism; pyridoxal 5'-phosphate salvage; pyridoxal 5'-phosphate from pyridoxamine 5'-phosphate: step 1/1. It participates in cofactor metabolism; pyridoxal 5'-phosphate salvage; pyridoxal 5'-phosphate from pyridoxine 5'-phosphate: step 1/1. Functionally, catalyzes the oxidation of either pyridoxine 5'-phosphate (PNP) or pyridoxamine 5'-phosphate (PMP) into pyridoxal 5'-phosphate (PLP). The protein is Pyridoxine/pyridoxamine 5'-phosphate oxidase of Agrobacterium fabrum (strain C58 / ATCC 33970) (Agrobacterium tumefaciens (strain C58)).